A 1456-amino-acid polypeptide reads, in one-letter code: Retrovirus-related Pol polyprotein from transposon RE2 (1456 aa).

Residues 205 to 252 are disordered; the sequence is NVVTHRNTNTNRNQNNRGDNRNYNNNNNRSNSWQPSSSGSRSDNRQPK. The segment covering 210–245 has biased composition (low complexity); it reads RNTNTNRNQNNRGDNRNYNNNNNRSNSWQPSSSGSR. The CCHC-type zinc finger occupies 257–273; the sequence is RCQICSVQGHSAKRCPQ. The span at 276 to 291 shows a compositional bias: low complexity; the sequence is QFQSTTNQQQSTSPFT. The interval 276–295 is disordered; sequence QFQSTTNQQQSTSPFTPWQP. Asp313 serves as the catalytic For protease activity. Residues 498–661 enclose the Integrase catalytic domain; the sequence is TSSKPLEYIY…SPFQKLFGQP (164 aa). Mg(2+) is bound by residues Asp509 and Asp571. Polar residues predominate over residues 738-754; sequence STSQEQRSDSAPNWPSH. Residues 738–896 form a disordered region; that stretch reads STSQEQRSDS…PPLPPVLPAP (159 aa). The segment covering 793–814 has biased composition (low complexity); that stretch reads SSSNLPSSSISSPSSSEPTAPS. Positions 816 to 827 are enriched in polar residues; it reads NGPQPTAQPHQT. Composition is skewed to low complexity over residues 828–841 and 849–886; these read QNSN…NNPN and SPNQ…STST. Positions 887–896 are enriched in pro residues; sequence PPLPPVLPAP. The 244-residue stretch at 965–1208 folds into the Reverse transcriptase Ty1/copia-type domain; it reads NHTWDLVPPP…LTAKPVATPM (244 aa).

It catalyses the reaction DNA(n) + a 2'-deoxyribonucleoside 5'-triphosphate = DNA(n+1) + diphosphate. The chain is Retrovirus-related Pol polyprotein from transposon RE2 (RE2) from Arabidopsis thaliana (Mouse-ear cress).